Consider the following 377-residue polypeptide: tRNA-specific 2-thiouridylase MnmA (377 aa).

ATP is bound by residues 16–23 (GMSGGVDS) and methionine 42. Positions 102-104 (NPD) are interaction with target base in tRNA. Cysteine 107 functions as the Nucleophile in the catalytic mechanism. A disulfide bridge links cysteine 107 with cysteine 204. An ATP-binding site is contributed by glycine 131. The tract at residues 154–156 (KDQ) is interaction with tRNA. Cysteine 204 functions as the Cysteine persulfide intermediate in the catalytic mechanism. An interaction with tRNA region spans residues 315–316 (RY).

This sequence belongs to the MnmA/TRMU family.

It is found in the cytoplasm. It catalyses the reaction S-sulfanyl-L-cysteinyl-[protein] + uridine(34) in tRNA + AH2 + ATP = 2-thiouridine(34) in tRNA + L-cysteinyl-[protein] + A + AMP + diphosphate + H(+). Functionally, catalyzes the 2-thiolation of uridine at the wobble position (U34) of tRNA, leading to the formation of s(2)U34. The sequence is that of tRNA-specific 2-thiouridylase MnmA from Lacticaseibacillus paracasei (strain ATCC 334 / BCRC 17002 / CCUG 31169 / CIP 107868 / KCTC 3260 / NRRL B-441) (Lactobacillus paracasei).